The primary structure comprises 376 residues: Chlorophyll synthase, chloroplastic (376 aa).

The N-terminal 47 residues, 1–47 (MATSHLLAAASSTAASSATFRPPLLSLRSPPPSSLRLNRRRHFQVVR), are a transit peptide targeting the chloroplast. A disordered region spans residues 48–69 (AAETDKETKANAPEKAPAGGSS). Helical transmembrane passes span 95–115 (PVTWPPLVWGVLCGAAASGNF), 171–191 (VITQIWALLLAGLGLGALLDV), 197–217 (FPIIFYLAVGGSLLSYIYSAP), 230–250 (FALGASYIGLPWWAGQALFGT), 255–275 (IVVLTSLYSIAGLGIAIVNDF), 300–320 (WICVGAIDITQLSVAGYLFSS), 325–345 (YALALLGLTIPQVVFQFQYFL), and 355–375 (YQASAQPFFVLGLLVTALATS).

The protein belongs to the UbiA prenyltransferase family. Chlorophyll synthase subfamily.

Its subcellular location is the plastid. The protein resides in the chloroplast membrane. The catalysed reaction is phytyl diphosphate + chlorophyllide a + H(+) = chlorophyll a + diphosphate. Its function is as follows. Involved in one of the last steps of the biosynthesis of chlorophyll a. This chain is Chlorophyll synthase, chloroplastic (CHLG), found in Oryza sativa subsp. japonica (Rice).